We begin with the raw amino-acid sequence, 204 residues long: MSREQLSQEIIEAGRFLYGRGWSPATSSNYSVRLSASEALLTVSGKHKGQLGPDDVLATDLAGNSLEPGKKPSAETLLHTQLYLCRPQVGAVLHTHSVNATVLSRLTASDHLVFEDYELQKAFNGVLTHESQVVVPIFDNDQDIARLAANVQPWLDAHPECAGYLIRGHGLYTWGARMSDALRQIEAFEFLFECELKMRTVMNR.

Residues H94 and H96 each contribute to the Zn(2+) site.

It belongs to the aldolase class II family. MtnB subfamily. Requires Zn(2+) as cofactor.

It catalyses the reaction 5-(methylsulfanyl)-D-ribulose 1-phosphate = 5-methylsulfanyl-2,3-dioxopentyl phosphate + H2O. The protein operates within amino-acid biosynthesis; L-methionine biosynthesis via salvage pathway; L-methionine from S-methyl-5-thio-alpha-D-ribose 1-phosphate: step 2/6. Its function is as follows. Catalyzes the dehydration of methylthioribulose-1-phosphate (MTRu-1-P) into 2,3-diketo-5-methylthiopentyl-1-phosphate (DK-MTP-1-P). In Pseudomonas syringae pv. tomato (strain ATCC BAA-871 / DC3000), this protein is Methylthioribulose-1-phosphate dehydratase.